Consider the following 111-residue polypeptide: Iron-sulfur cluster assembly protein CyaY (111 aa).

This sequence belongs to the frataxin family.

Involved in iron-sulfur (Fe-S) cluster assembly. May act as a regulator of Fe-S biogenesis. The protein is Iron-sulfur cluster assembly protein CyaY of Cupriavidus necator (strain ATCC 17699 / DSM 428 / KCTC 22496 / NCIMB 10442 / H16 / Stanier 337) (Ralstonia eutropha).